Here is a 737-residue protein sequence, read N- to C-terminus: Exostosin-1c (737 aa).

At 1-6 (MQARKK) the chain is on the cytoplasmic side. The chain crosses the membrane as a helical; Signal-anchor for type II membrane protein span at residues 7-27 (YVLLGLCTCCWILLYYWAGLQ). Residues 28 to 737 (ERLLGLITHR…RKRYKDLERV (710 aa)) lie on the Lumenal side of the membrane. Asn-194 and Asn-322 each carry an N-linked (GlcNAc...) asparagine glycan. Arg-432, Arg-540, Asp-556, Glu-557, Asp-558, Glu-644, Asp-645, and Arg-692 together coordinate UDP-N-acetyl-alpha-D-glucosamine. Asp-558 serves as a coordination point for Mn(2+). An intrachain disulfide couples Cys-643 to Cys-695. Residue Asp-645 is part of the active site.

It belongs to the glycosyltransferase 47 family. Mn(2+) is required as a cofactor.

The protein localises to the endoplasmic reticulum membrane. The catalysed reaction is 3-O-{[(1-&gt;4)-beta-D-GlcA-(1-&gt;4)-alpha-D-GlcNAc](n)-(1-&gt;4)-beta-D-GlcA-(1-&gt;3)-beta-D-Gal-(1-&gt;3)-beta-D-Gal-(1-&gt;4)-beta-D-Xyl}-L-seryl-[protein] + UDP-N-acetyl-alpha-D-glucosamine = 3-O-{alpha-D-GlcNAc-[(1-&gt;4)-beta-D-GlcA-(1-&gt;4)-alpha-D-GlcNAc](n)-(1-&gt;4)-beta-D-GlcA-(1-&gt;3)-beta-D-Gal-(1-&gt;3)-beta-D-Gal-(1-&gt;4)-beta-D-Xyl}-L-seryl-[protein] + UDP + H(+). The enzyme catalyses 3-O-{alpha-D-GlcNAc-[(1-&gt;4)-beta-D-GlcA-(1-&gt;4)-alpha-D-GlcNAc](n)-(1-&gt;4)-beta-D-GlcA-(1-&gt;3)-beta-D-Gal-(1-&gt;3)-beta-D-Gal-(1-&gt;4)-beta-D-Xyl}-L-seryl-[protein] + UDP-alpha-D-glucuronate = 3-O-{[(1-&gt;4)-beta-D-GlcA-(1-&gt;4)-alpha-D-GlcNAc](n+1)-(1-&gt;4)-beta-D-GlcA-(1-&gt;3)-beta-D-Gal-(1-&gt;3)-beta-D-Gal-(1-&gt;4)-beta-D-Xyl}-L-seryl-[protein] + UDP + H(+). It participates in protein modification; protein glycosylation. Glycosyltransferase required for the biosynthesis of heparan-sulfate. This Danio rerio (Zebrafish) protein is Exostosin-1c (ext1c).